Reading from the N-terminus, the 199-residue chain is ATP synthase subunit a (199 aa).

A run of 6 helical transmembrane segments spans residues 2–22, 25–45, 53–73, 80–100, 143–163, and 164–184; these read TNVYFLDIFMFVYVLQFLFYF, SMLGVLVNKFLGLLVVVFSYT, VISVFTFLVLLTCCFGGYFMY, MIEFTFVYAMVAWLSTLLTFI, VNVLVGHVISMMLYQLLELYL, and GIFYVWIVVLAIVMECFVFFI.

The protein belongs to the ATPase A chain family. F-type ATPases have 2 components, CF(1) - the catalytic core - and CF(0) - the membrane proton channel. CF(1) has five subunits: alpha(3), beta(3), gamma(1), delta(1), epsilon(1). CF(0) has three main subunits: a, b and c.

It is found in the mitochondrion inner membrane. In terms of biological role, mitochondrial membrane ATP synthase (F(1)F(0) ATP synthase or Complex V) produces ATP from ADP in the presence of a proton gradient across the membrane which is generated by electron transport complexes of the respiratory chain. F-type ATPases consist of two structural domains, F(1) - containing the extramembraneous catalytic core and F(0) - containing the membrane proton channel, linked together by a central stalk and a peripheral stalk. During catalysis, ATP synthesis in the catalytic domain of F(1) is coupled via a rotary mechanism of the central stalk subunits to proton translocation. Key component of the proton channel; it may play a direct role in the translocation of protons across the membrane. The protein is ATP synthase subunit a (ATP6) of Ascaris suum (Pig roundworm).